Consider the following 317-residue polypeptide: Acetyl-coenzyme A carboxylase carboxyl transferase subunit alpha (317 aa).

Residues 33-294 (NLDDEIARLQ…KQRLLDDLKE (262 aa)) enclose the CoA carboxyltransferase C-terminal domain.

Belongs to the AccA family. Acetyl-CoA carboxylase is a heterohexamer composed of biotin carboxyl carrier protein (AccB), biotin carboxylase (AccC) and two subunits each of ACCase subunit alpha (AccA) and ACCase subunit beta (AccD).

The protein localises to the cytoplasm. The catalysed reaction is N(6)-carboxybiotinyl-L-lysyl-[protein] + acetyl-CoA = N(6)-biotinyl-L-lysyl-[protein] + malonyl-CoA. It participates in lipid metabolism; malonyl-CoA biosynthesis; malonyl-CoA from acetyl-CoA: step 1/1. Component of the acetyl coenzyme A carboxylase (ACC) complex. First, biotin carboxylase catalyzes the carboxylation of biotin on its carrier protein (BCCP) and then the CO(2) group is transferred by the carboxyltransferase to acetyl-CoA to form malonyl-CoA. The sequence is that of Acetyl-coenzyme A carboxylase carboxyl transferase subunit alpha from Pasteurella multocida (strain Pm70).